The primary structure comprises 404 residues: UBP1-associated protein 2C (404 aa).

Residues 1-29 (MDMMKKRKLDENGNGLNTNGGGTIGPTRL) are disordered. 2 consecutive RRM domains span residues 75 to 152 (RKLF…LAAS) and 167 to 248 (RKIY…GKKG). Disordered regions lie at residues 246–270 (KKGGKPGMPQAQDGGSGHGHVHGEG) and 344–404 (GSGQ…PPNY).

In terms of tissue distribution, expressed in root apical and lateral meristems, young leaves and embryos.

It is found in the nucleus. Heterogeneous nuclear ribonucleoprotein (hnRNP)-like protein that acts as a component of a complex regulating the turnover of mRNAs in the nucleus. Binds with high affinity to RNA molecules that contain U-rich sequences in 3'-UTRs. May function in complex with UBP1 and contribute to the stabilization of mRNAs in the nucleus. The sequence is that of UBP1-associated protein 2C (UBA2C) from Arabidopsis thaliana (Mouse-ear cress).